We begin with the raw amino-acid sequence, 2443 residues long: Non-reducing polyketide synthase olcA (2443 aa).

The Ketosynthase family 3 (KS3) domain occupies 5–442 (IEPIAIVGTG…GANVHAILES (438 aa)). Residues Cys178, His317, and His362 each act as for beta-ketoacyl synthase activity in the active site. The malonyl-CoA:ACP transacylase (MAT) domain stretch occupies residues 550 to 885 (GVFTGQGAQW…AAIGSLWTYL (336 aa)). Ser645 acts as the For acyl/malonyl transferase activity in catalysis. The tract at residues 940–1070 (NCLLGVLSPD…GVLTMTLGSA (131 aa)) is N-terminal hotdog fold. A PKS/mFAS DH domain is found at 940–1231 (NCLLGVLSPD…LVPLLEDLAD (292 aa)). A product template (PT) domain region spans residues 989–1497 (ALESAKLIAG…SLPVTISNMR (509 aa)). A C-terminal hotdog fold region spans residues 1085–1231 (MRAVDIEDFY…LVPLLEDLAD (147 aa)). The tract at residues 1771–2159 (NKRYLAHTHV…LERFTCALPP (389 aa)) is methyltransferase (CMeT) domain. The region spanning 2359-2434 (EILTSHLLTQ…EITSSAAAKL (76 aa)) is the Carrier domain. O-(pantetheine 4'-phosphoryl)serine is present on Ser2394.

The enzyme catalyses nicotinyl-CoA + 2 malonyl-CoA + H(+) = 4-hydroxy-6-(pyridin-3-yl)-2H-pyran-2-one + 2 CO2 + 3 CoA. It functions in the pathway secondary metabolite biosynthesis; terpenoid biosynthesis. Functionally, non-reducing polyketide synthase; part of the gene cluster that mediates the biosynthesis of 15-deoxyoxalicine B. The first step of the pathway is the synthesis of nicotinyl-CoA from nicotinic acid by the nicotinic acid-CoA ligase olcI. Nicotinyl-CoA is then a substrate of polyketide synthase olcA to produce 4-hydroxy-6-(3-pyridinyl)-2H-pyran-2-one (HPPO) which is further prenylated by the polyprenyl transferase olcH to yield geranylgeranyl-HPPO. Geranylgeranyl pyrophosphate is provided by the cluster-specific geranylgeranyl pyrophosphate synthase olcC. The FAD-dependent monooxygenase olcE catalyzes the epoxidation of geranylgeranyl-HPPO and the terpene cyclase olcD catalyzes the cyclization of the terpenoid component, resulting in the formation of the tricyclic terpene moiety seen in predecaturin E. The cytochrome P450 monooxygenase then catalyzes the allylic oxidation of predecaturin E, which is followed by spirocylization with concomitant loss of one molecule of water to form decaturin E. Decaturin E is the substrate of the cytochrome P450 monooxygenase olcJ which hydroxylates it at the C-29 position to form decaturin F. The short-chain dehydrogenase/reductase olcF may catalyze the oxidation of decaturin F to generate the 29-hydroxyl-27-one intermediate, and subsequent hemiacetal formation probably leads to the formation of decaturin C. The dioxygenase olcK may be a peroxisomal enzyme that catalyzes the hydroxylation of decaturin C into decaturin A once decaturin C is shuttled into the peroxisome by the MFS transporter olcL. Finally the cytochrome P450 monooxygenase olcB catalyzes the oxidative rearrangement to yield 15-deoxyoxalicine B. In the absence of olcJ, decaturin E may be shunted to a pathway in which it is oxidized to a ketone, possibly by olcF, to form decaturin D, which undergoes further allylic oxidation to yield decaturin G. Moreover, in the absence of oclK or oclL, oclB can convert decaturin C into 15-deoxyoxalicine A. The protein is Non-reducing polyketide synthase olcA of Penicillium canescens.